Reading from the N-terminus, the 976-residue chain is Ephrin type-A receptor 2 (976 aa).

The first 23 residues, 1–23 (MELQAARACFALLWGCALAAAAA), serve as a signal peptide directing secretion. The segment at 1–206 (MELQAARACF…YYKKCPELLQ (206 aa)) is mediates interaction with CLDN4. The Extracellular segment spans residues 24–537 (AQGKEVVLLD…SPEGSGNLAV (514 aa)). The region spanning 28–206 (EVVLLDFAAA…YYKKCPELLQ (179 aa)) is the Eph LBD domain. 2 disulfides stabilise this stretch: C70/C188 and C105/C115. Residues 328–432 (PPSAPHYLTA…TSRSFRTASV (105 aa)) form the Fibronectin type-III 1 domain. 2 N-linked (GlcNAc...) asparagine glycosylation sites follow: N407 and N435. Residues 438 to 529 (EPPKVRLEGR…KVHEFQTLSP (92 aa)) enclose the Fibronectin type-III 2 domain. Residues 538 to 558 (IGGVAVGVVLLLVLAGVGFFI) traverse the membrane as a helical segment. At 559–976 (HRRRKNQRAR…DQVNTVGIPI (418 aa)) the chain is on the cytoplasmic side. S570 is modified (phosphoserine). Phosphotyrosine is present on Y575. S579 carries the post-translational modification Phosphoserine. Residue Y588 is modified to Phosphotyrosine; by autocatalysis. Y594 bears the Phosphotyrosine mark. The tract at residues 606–906 (TEIHPSCVTR…STSGSEGVPF (301 aa)) is mediates interaction with ARHGEF16 and ELMO2. One can recognise a Protein kinase domain in the interval 613–875 (VTRQKVIGAG…DIVSILDKLI (263 aa)). Residue 619 to 627 (IGAGEFGEV) participates in ATP binding. Position 628 is a phosphotyrosine (Y628). An ATP-binding site is contributed by K646. Position 647 is a phosphothreonine (T647). Y735 is subject to Phosphotyrosine; by autocatalysis. The Proton acceptor role is filled by D739. Y772 bears the Phosphotyrosine mark. S869 and S892 each carry phosphoserine. The segment at 886–976 (DFDPRVSIRL…DQVNTVGIPI (91 aa)) is negatively regulates interaction with ARHGEF16. Residue S897 is modified to Phosphoserine; by PKB/AKT1, RPS6KA1, RPS6KA3 AND PKA. The residue at position 901 (S901) is a Phosphoserine. The region spanning 904-968 (VPFRTVSEWL…AYSLLGLKDQ (65 aa)) is the SAM domain. A Phosphotyrosine; by autocatalysis modification is found at Y921. A Phosphotyrosine modification is found at Y930. The PDZ-binding signature appears at 974 to 976 (IPI).

It belongs to the protein kinase superfamily. Tyr protein kinase family. Ephrin receptor subfamily. Homodimer. Interacts with SLA. Interacts (phosphorylated form) with VAV2, VAV3 and PI3-kinase p85 subunit (PIK3R1, PIK3R2 or PIK3R3); critical for the EFNA1-induced activation of RAC1 which stimulates cell migration. Interacts with INPPL1; regulates activated EPHA2 endocytosis and degradation. Interacts (inactivated form) with PTK2/FAK1 and interacts (EFNA1 ligand-activated form) with PTPN11; regulates integrin-mediated adhesion. Interacts with ARHGEF16, DOCK4 and ELMO2; mediates ligand-independent activation of RAC1 which stimulates cell migration. Interacts with CLDN4; phosphorylates CLDN4 and may regulate tight junctions. Interacts with ACP1. Interacts (via SAM domain) with ANKS1A (via SAM domain). Interacts with CEMIP. Interacts with NCK1; may regulate EPHA2 activity in cell migration and adhesion. Interacts with TIMD4. As to quaternary structure, (Microbial infection) Interacts with human herpes virus 8/HHV-8 glycoprotein L/gL and glycoprotein H/gH heterodimer; this interaction triggers EPHA2 phosphorylation and endocytosis, allowing virus entry. In terms of assembly, (Microbial infection) Interacts with human cytomegalovirus (HCMV) glycoprotein L/gL and glycoprotein H/gH heterodimer. (Microbial infection) Interacts with Epstein-Barr virus/HHV-4 glycoprotein L/gL and glycoprotein H/gH heterodimer; this interaction facilitates virus internalization and fusion. Post-translationally, autophosphorylates. Phosphorylated on tyrosine upon binding and activation by EFNA1. Phosphorylated residues Tyr-588 and Tyr-594 are required for binding VAV2 and VAV3 while phosphorylated residues Tyr-735 and Tyr-930 are required for binding PI3-kinase p85 subunit (PIK3R1, PIK3R2 or PIK3R3). These phosphorylated residues are critical for recruitment of VAV2 and VAV3 and PI3-kinase p85 subunit which transduce downstream signaling to activate RAC1 GTPase and cell migration. Dephosphorylation of Tyr-930 by PTPRF prevents the interaction of EPHA2 with NCK1. Phosphorylated at Ser-897 by PKB; serum-induced phosphorylation which targets EPHA2 to the cell leading edge and stimulates cell migration. Phosphorylation by PKB is inhibited by EFNA1-activated EPHA2 which regulates PKB activity via a reciprocal regulatory loop. Phosphorylated at Ser-897 in response to TNF by RPS6KA1 and RPS6KA3; RPS6KA-EPHA2 signaling pathway controls cell migration. Phosphorylated at Ser-897 by PKA; blocks cell retraction induced by EPHA2 kinase activity. Dephosphorylated by ACP1. Ubiquitinated by CHIP/STUB1. Ubiquitination is regulated by the HSP90 chaperone and regulates the receptor stability and activity through proteasomal degradation. ANKS1A prevents ubiquitination and degradation. Expressed in brain and glioma tissue and glioma cell lines (at protein level). Expressed most highly in tissues that contain a high proportion of epithelial cells, e.g. skin, intestine, lung, and ovary.

It localises to the cell membrane. It is found in the cell projection. Its subcellular location is the ruffle membrane. The protein resides in the lamellipodium membrane. The protein localises to the cell junction. It localises to the focal adhesion. It carries out the reaction L-tyrosyl-[protein] + ATP = O-phospho-L-tyrosyl-[protein] + ADP + H(+). Receptor tyrosine kinase which binds promiscuously membrane-bound ephrin-A family ligands residing on adjacent cells, leading to contact-dependent bidirectional signaling into neighboring cells. The signaling pathway downstream of the receptor is referred to as forward signaling while the signaling pathway downstream of the ephrin ligand is referred to as reverse signaling. Activated by the ligand ephrin-A1/EFNA1 regulates migration, integrin-mediated adhesion, proliferation and differentiation of cells. Regulates cell adhesion and differentiation through DSG1/desmoglein-1 and inhibition of the ERK1/ERK2 (MAPK3/MAPK1, respectively) signaling pathway. May also participate in UV radiation-induced apoptosis and have a ligand-independent stimulatory effect on chemotactic cell migration. During development, may function in distinctive aspects of pattern formation and subsequently in development of several fetal tissues. Involved for instance in angiogenesis, in early hindbrain development and epithelial proliferation and branching morphogenesis during mammary gland development. Engaged by the ligand ephrin-A5/EFNA5 may regulate lens fiber cells shape and interactions and be important for lens transparency development and maintenance. With ephrin-A2/EFNA2 may play a role in bone remodeling through regulation of osteoclastogenesis and osteoblastogenesis. In terms of biological role, (Microbial infection) Acts as a receptor for hepatitis C virus (HCV) in hepatocytes and facilitates its cell entry. Mediates HCV entry by promoting the formation of the CD81-CLDN1 receptor complexes that are essential for HCV entry and by enhancing membrane fusion of cells expressing HCV envelope glycoproteins. Functionally, acts as a receptor for human cytomegalovirus (HCMV) to mediate viral entry and fusion in glioblastoma cells. In Homo sapiens (Human), this protein is Ephrin type-A receptor 2 (EPHA2).